A 200-amino-acid chain; its full sequence is GTP cyclohydrolase-2 (200 aa).

49–53 (RIHSE) lines the GTP pocket. Zn(2+)-binding residues include Cys54, Cys65, and Cys67. Residues Gln70, 92 to 94 (EGR), and Thr114 each bind GTP. Asp126 (proton acceptor) is an active-site residue. The active-site Nucleophile is the Arg128. GTP contacts are provided by Thr149 and Lys154.

It belongs to the GTP cyclohydrolase II family. Requires Zn(2+) as cofactor.

The catalysed reaction is GTP + 4 H2O = 2,5-diamino-6-hydroxy-4-(5-phosphoribosylamino)-pyrimidine + formate + 2 phosphate + 3 H(+). It functions in the pathway cofactor biosynthesis; riboflavin biosynthesis; 5-amino-6-(D-ribitylamino)uracil from GTP: step 1/4. Its function is as follows. Catalyzes the conversion of GTP to 2,5-diamino-6-ribosylamino-4(3H)-pyrimidinone 5'-phosphate (DARP), formate and pyrophosphate. The sequence is that of GTP cyclohydrolase-2 from Saccharophagus degradans (strain 2-40 / ATCC 43961 / DSM 17024).